The chain runs to 440 residues: uncharacterized protein (440 aa).

An N-terminal signal peptide occupies residues 1–19; the sequence is MKKLLLAASIVYFASACLA.

This is an uncharacterized protein from Rickettsia prowazekii (strain Madrid E).